We begin with the raw amino-acid sequence, 429 residues long: Cholesterol 7-desaturase nvd (429 aa).

A helical membrane pass occupies residues 23-43; it reads FVICLWTLAVTFIRIYWIFFV. The 104-residue stretch at 98–201 folds into the Rieske domain; the sequence is YGILKSSQLK…SQEVDGFIFI (104 aa). [2Fe-2S] cluster is bound by residues Cys-138, His-140, Cys-158, and His-161.

This sequence belongs to the cholesterol 7-desaturase family. [2Fe-2S] cluster is required as a cofactor. As to expression, expressed predominantly in the prothoracic gland and weakly in brain and malpighian tubules.

It is found in the membrane. The enzyme catalyses cholesterol + NADPH + O2 + H(+) = 7-dehydrocholesterol + NADP(+) + 2 H2O. The catalysed reaction is cholesterol + NADH + O2 + H(+) = 7-dehydrocholesterol + NAD(+) + 2 H2O. It functions in the pathway steroid hormone biosynthesis; dafachronic acid biosynthesis. In terms of biological role, catalyzes the production of 7-dehydrocholesterol (7-DHC or cholesta-5,7-dien-3beta-ol) by inserting a double bond (desaturating) at the C7-C8 single bond of cholesterol. Essential regulator of steroid biosynthesis, as this reaction is the first step in the synthesis of the steroid hormone Delta(7)-dafachronic acid. Required for insect molting, metamorphosis and body growth throughout development via the regulation of ecdysteroid biosynthesis in the prothoracic gland. The protein is Cholesterol 7-desaturase nvd of Drosophila melanogaster (Fruit fly).